Here is a 336-residue protein sequence, read N- to C-terminus: Flavonoid 4'-O-methyltransferase 5 (336 aa).

S-adenosyl-L-methionine-binding residues include tyrosine 140 and aspartate 203. Histidine 241 acts as the Proton acceptor in catalysis.

This sequence belongs to the class I-like SAM-binding methyltransferase superfamily. Cation-independent O-methyltransferase family. Homodimer. Expressed in leaves.

It carries out the reaction genkwanin + S-adenosyl-L-methionine = apigenin 4',7-dimethyl ether + S-adenosyl-L-homocysteine. The catalysed reaction is cirsiliol + S-adenosyl-L-methionine = eupatorin + S-adenosyl-L-homocysteine + H(+). It catalyses the reaction cirsimaritin + S-adenosyl-L-methionine = salvigenin + S-adenosyl-L-homocysteine + H(+). The enzyme catalyses scutellarein 7-methyl ether + S-adenosyl-L-methionine = ladanein + S-adenosyl-L-homocysteine + H(+). It carries out the reaction (2S)-sakuranetin + S-adenosyl-L-methionine = (2S)-naringenin 4',7-dimethyl ether + S-adenosyl-L-homocysteine + H(+). It functions in the pathway flavonoid metabolism. With respect to regulation, substrate inhibition by genkwanin (GENK) at concentrations above 10 mM. Functionally, flavonoid 4'-O-methyltransferase involved in the biosynthesis of polymethoxylated flavonoids natural products such as nevadensin and salvigenin, aroma compounds which contribute to the flavor of sweet basil, and exhibit pharmacological activities such as anti-allergic, anti-oxidant, antibacterial, anti-proliferative, and anti-inflammatory effects. Catalyzes S-adenosylmethionine-dependent regioselective 4'-O-methylation of flavonoids; active on various hydroxylated flavonoid substrates, including scutellarein-7-methyl ether (SCU7Me) and, with a lower efficiency, cirsimaritin (CIRM), sakuranetin (NAR7Me), ladanein (LAD) and genkwanin (GENK). This chain is Flavonoid 4'-O-methyltransferase 5, found in Ocimum basilicum (Sweet basil).